A 294-amino-acid chain; its full sequence is tRNA dimethylallyltransferase (294 aa).

Residue 10–17 (GPTAVGKT) participates in ATP binding. 12–17 (TAVGKT) is a binding site for substrate. The interaction with substrate tRNA stretch occupies residues 35 to 38 (DSQQ).

This sequence belongs to the IPP transferase family. Monomer. Mg(2+) serves as cofactor.

The enzyme catalyses adenosine(37) in tRNA + dimethylallyl diphosphate = N(6)-dimethylallyladenosine(37) in tRNA + diphosphate. Its function is as follows. Catalyzes the transfer of a dimethylallyl group onto the adenine at position 37 in tRNAs that read codons beginning with uridine, leading to the formation of N6-(dimethylallyl)adenosine (i(6)A). The sequence is that of tRNA dimethylallyltransferase from Streptococcus gordonii (strain Challis / ATCC 35105 / BCRC 15272 / CH1 / DL1 / V288).